The sequence spans 662 residues: Methyl-accepting chemotaxis protein McpB (662 aa).

The Cytoplasmic segment spans residues 1–16; sequence MKTFINWLKKPSISKK. The chain crosses the membrane as a helical span at residues 17–37; it reads LIVSFIAILIIPILILEFSSY. Topologically, residues 38 to 282 are extracellular; the sequence is RSASGKLDQE…IKDASKSVLT (245 aa). Residues 153-229 form the Cache domain; it reads VTDPYVAASD…KAGEKLSGDW (77 aa). A helical transmembrane segment spans residues 283–303; the sequence is TGMIVLIASIVAGGILILFIV. The HAMP domain maps to 304 to 356; sequence RSITKPLKRLVQSSKTISRGDLTETIEIHSKDELGELGESFNEMGQSLRSLIS. The Cytoplasmic segment spans residues 304-662; it reads RSITKPLKRL…RDLTKQFKIE (359 aa). Glutamate methyl ester (Gln) is present on residues Gln371 and Gln595. In terms of domain architecture, Methyl-accepting transducer spans 375–611; sequence SAGQTSKATE…HVSAAVSGIA (237 aa). Glutamate methyl ester (Glu) is present on residues Glu630 and Glu637.

It belongs to the methyl-accepting chemotaxis (MCP) protein family. In terms of assembly, interacts with FloT. Post-translationally, some glutamine residues are deamidated to glutamate by CheD and subsequently methylated. The demethylation is selective. Gln-371 is demethylated only upon asparagine addition whereas Glu-637 is demethylated only upon asparagine removal. Glu-630 appears indiscriminate and is demethylated upon both addition and removal of asparagine.

It is found in the cell membrane. The protein localises to the membrane raft. Its function is as follows. Chemotactic-signal transducers respond to changes in the concentration of attractants and repellents in the environment, transduce a signal from the outside to the inside of the cell, and facilitate sensory adaptation through the variation of the level of methylation. All amino acids serve as attractants in B.subtilis, they appear to cause an increase in the turnover methyl groups, leading to methylation of an unidentified acceptor, while repellents have been shown to cause a decrease in methyl group turnover. The methyl groups are added by a methyltransferase and removed by a methylesterase. McpB is required for taxis towards asparagine, aspartate, glutamine, and histidine. This is Methyl-accepting chemotaxis protein McpB (mcpB) from Bacillus subtilis (strain 168).